Here is a 131-residue protein sequence, read N- to C-terminus: Large ribosomal subunit protein uL18 (131 aa).

It belongs to the universal ribosomal protein uL18 family. Part of the 50S ribosomal subunit; part of the 5S rRNA/L5/L18/L25 subcomplex. Contacts the 5S and 23S rRNAs.

In terms of biological role, this is one of the proteins that bind and probably mediate the attachment of the 5S RNA into the large ribosomal subunit, where it forms part of the central protuberance. The chain is Large ribosomal subunit protein uL18 from Corynebacterium kroppenstedtii (strain DSM 44385 / JCM 11950 / CIP 105744 / CCUG 35717).